A 760-amino-acid polypeptide reads, in one-letter code: Alpha-amylase (760 aa).

A signal peptide spans 1–34 (MSKRSKLLKRRMLSLSVICVLIGYGPVFNPVRSQ). Asn143, Thr184, and Asp192 together coordinate Ca(2+). The active-site Nucleophile is Asp222. Ca(2+) is bound at residue His226. Glu262 functions as the Proton donor in the catalytic mechanism.

The protein belongs to the glycosyl hydrolase 13 family. Monomer. Ca(2+) is required as a cofactor.

The catalysed reaction is Endohydrolysis of (1-&gt;4)-alpha-D-glucosidic linkages in polysaccharides containing three or more (1-&gt;4)-alpha-linked D-glucose units.. This chain is Alpha-amylase (amyA), found in Clostridium acetobutylicum (strain ATCC 824 / DSM 792 / JCM 1419 / IAM 19013 / LMG 5710 / NBRC 13948 / NRRL B-527 / VKM B-1787 / 2291 / W).